The following is a 229-amino-acid chain: Ribose-5-phosphate isomerase A (229 aa).

Substrate-binding positions include 28–31, 85–88, and 98–101; these read TGST, DGAD, and KGRG. Glutamate 107 (proton acceptor) is an active-site residue. Lysine 125 contributes to the substrate binding site.

The protein belongs to the ribose 5-phosphate isomerase family. In terms of assembly, homodimer.

It carries out the reaction aldehydo-D-ribose 5-phosphate = D-ribulose 5-phosphate. It functions in the pathway carbohydrate degradation; pentose phosphate pathway; D-ribose 5-phosphate from D-ribulose 5-phosphate (non-oxidative stage): step 1/1. In terms of biological role, catalyzes the reversible conversion of ribose-5-phosphate to ribulose 5-phosphate. This Pyrococcus furiosus (strain ATCC 43587 / DSM 3638 / JCM 8422 / Vc1) protein is Ribose-5-phosphate isomerase A.